A 192-amino-acid chain; its full sequence is Ion-translocating oxidoreductase complex subunit A (192 aa).

Helical transmembrane passes span 5–25, 39–59, 72–92, 102–122, 134–154, and 171–191; these read LLLLVGTVLVNNFVLVKFLGL, IGMSMATTFVLTLASILSYLV, LRTMAFILVIAVVVQFTEMLV, ALGIYLPLITTNCAVLGVALL, AIYGFGAAVGFSIVLILFSAM, and AIAMITAGLMSLAFMGFTGLV.

Belongs to the NqrDE/RnfAE family. As to quaternary structure, the complex is composed of six subunits: RnfA, RnfB, RnfC, RnfD, RnfE and RnfG.

It is found in the cell inner membrane. Functionally, part of a membrane-bound complex that couples electron transfer with translocation of ions across the membrane. This Shewanella loihica (strain ATCC BAA-1088 / PV-4) protein is Ion-translocating oxidoreductase complex subunit A.